The primary structure comprises 224 residues: Large ribosomal subunit protein bL25 (224 aa).

Residues 195-224 (TVEEVDEAAEVDAADVPATEQGTDESKDGE) are disordered. Residues 197-207 (EEVDEAAEVDA) show a composition bias toward acidic residues.

This sequence belongs to the bacterial ribosomal protein bL25 family. CTC subfamily. In terms of assembly, part of the 50S ribosomal subunit; part of the 5S rRNA/L5/L18/L25 subcomplex. Contacts the 5S rRNA. Binds to the 5S rRNA independently of L5 and L18.

Its function is as follows. This is one of the proteins that binds to the 5S RNA in the ribosome where it forms part of the central protuberance. The sequence is that of Large ribosomal subunit protein bL25 from Psychrobacter cryohalolentis (strain ATCC BAA-1226 / DSM 17306 / VKM B-2378 / K5).